Reading from the N-terminus, the 382-residue chain is Methylthioribose-1-phosphate isomerase (382 aa).

Residue Asp-258 is the Proton donor of the active site.

Belongs to the eIF-2B alpha/beta/delta subunits family. MtnA subfamily.

The protein resides in the cytoplasm. The protein localises to the nucleus. The enzyme catalyses 5-(methylsulfanyl)-alpha-D-ribose 1-phosphate = 5-(methylsulfanyl)-D-ribulose 1-phosphate. Its pathway is amino-acid biosynthesis; L-methionine biosynthesis via salvage pathway; L-methionine from S-methyl-5-thio-alpha-D-ribose 1-phosphate: step 1/6. Catalyzes the interconversion of methylthioribose-1-phosphate (MTR-1-P) into methylthioribulose-1-phosphate (MTRu-1-P). The protein is Methylthioribose-1-phosphate isomerase of Laccaria bicolor (strain S238N-H82 / ATCC MYA-4686) (Bicoloured deceiver).